The following is a 148-amino-acid chain: Transcription antitermination protein NusB (148 aa).

It belongs to the NusB family.

In terms of biological role, involved in transcription antitermination. Required for transcription of ribosomal RNA (rRNA) genes. Binds specifically to the boxA antiterminator sequence of the ribosomal RNA (rrn) operons. The chain is Transcription antitermination protein NusB from Desulfitobacterium hafniense (strain DSM 10664 / DCB-2).